The sequence spans 814 residues: Testis-specific zinc finger protein topi (814 aa).

C2H2-type zinc fingers lie at residues 228-250 (NECTMCDRKFVHASGLVRHMEKH), 275-297 (VKCNSCGRIFYDPQVAFRHGLIH), 360-382 (LQCEFCEYIFADIAELLVHSASH), 429-453 (FVCNVCELKFANTDLLQEHRCTSFH), 467-490 (LPCDFCDVNFEFAHDFLAHSEEKH), 511-533 (YLCDICGKSYTQSSHLWQHLRFH), 539-564 (FVCQEENCDRKFTIRPDLNDHIRKCH), 570-592 (YLCLVCGKRFLTGSVFYQHRLIH), 598-620 (YECEECGKRFYRADALKNHQRIH), and 626-649 (YSCLFCTKTFRQRGDRDKHIRARH). The tract at residues 669–705 (TAAAQKAQSHNPEQQDNDVAGGASTSDVPSGSGFMST) is disordered. A compositionally biased stretch (polar residues) spans 691 to 705 (ASTSDVPSGSGFMST).

In terms of assembly, interacts with comr. In terms of tissue distribution, expressed in testis; primary spermatocytes.

The protein localises to the nucleus. Functionally, required for male meiotic division and spermatid differentiation. Required for accumulation of aly and comr on chromatin. May function as a transcription factor. This is Testis-specific zinc finger protein topi (topi) from Drosophila melanogaster (Fruit fly).